Reading from the N-terminus, the 152-residue chain is Xanthine-guanine phosphoribosyltransferase (152 aa).

Residues 37–38, Arg69, and 88–96 each bind 5-phospho-alpha-D-ribose 1-diphosphate; these read RG and DDLVDTGGT. Arg69 is a GMP binding site. Residue Asp89 participates in Mg(2+) binding. Guanine-binding residues include Asp92 and Ile135. Xanthine-binding residues include Asp92 and Ile135. GMP is bound by residues 92–96 and 134–135; these read DTGGT and WI.

The protein belongs to the purine/pyrimidine phosphoribosyltransferase family. XGPT subfamily. Homotetramer. Requires Mg(2+) as cofactor.

It is found in the cell inner membrane. The enzyme catalyses GMP + diphosphate = guanine + 5-phospho-alpha-D-ribose 1-diphosphate. It carries out the reaction XMP + diphosphate = xanthine + 5-phospho-alpha-D-ribose 1-diphosphate. It catalyses the reaction IMP + diphosphate = hypoxanthine + 5-phospho-alpha-D-ribose 1-diphosphate. Its pathway is purine metabolism; GMP biosynthesis via salvage pathway; GMP from guanine: step 1/1. The protein operates within purine metabolism; XMP biosynthesis via salvage pathway; XMP from xanthine: step 1/1. In terms of biological role, purine salvage pathway enzyme that catalyzes the transfer of the ribosyl-5-phosphate group from 5-phospho-alpha-D-ribose 1-diphosphate (PRPP) to the N9 position of the 6-oxopurines guanine and xanthine to form the corresponding ribonucleotides GMP (guanosine 5'-monophosphate) and XMP (xanthosine 5'-monophosphate), with the release of PPi. To a lesser extent, also acts on hypoxanthine. This Pectobacterium atrosepticum (strain SCRI 1043 / ATCC BAA-672) (Erwinia carotovora subsp. atroseptica) protein is Xanthine-guanine phosphoribosyltransferase.